The primary structure comprises 282 residues: Pantothenate synthetase (282 aa).

M30–H37 serves as a coordination point for ATP. H37 serves as the catalytic Proton donor. Q61 contacts (R)-pantoate. Residue Q61 participates in beta-alanine binding. G147–D150 provides a ligand contact to ATP. Position 153 (Q153) interacts with (R)-pantoate. Residues V176 and L184–R187 each bind ATP.

The protein belongs to the pantothenate synthetase family. In terms of assembly, homodimer.

It is found in the cytoplasm. It catalyses the reaction (R)-pantoate + beta-alanine + ATP = (R)-pantothenate + AMP + diphosphate + H(+). Its pathway is cofactor biosynthesis; (R)-pantothenate biosynthesis; (R)-pantothenate from (R)-pantoate and beta-alanine: step 1/1. Functionally, catalyzes the condensation of pantoate with beta-alanine in an ATP-dependent reaction via a pantoyl-adenylate intermediate. The protein is Pantothenate synthetase of Desulfovibrio desulfuricans (strain ATCC 27774 / DSM 6949 / MB).